Here is a 3110-residue protein sequence, read N- to C-terminus: Huntingtin (3110 aa).

Residues 1 to 58 are disordered; that stretch reads MKAFESLKSFQQQQQQQQPPPQPPPPPPPPPQPPQPPPQGQPPPPPPLPGPAEEPLHR. The residue at position 2 (lysine 2) is an N6-acetyllysine. The span at 18 to 52 shows a compositional bias: pro residues; it reads QPPPQPPPPPPPPPQPPQPPPQGQPPPPPPLPGPA. 2 positions are modified to N6-acetyllysine: lysine 146 and lysine 204. HEAT repeat units lie at residues 174–211 and 216–253; these read PYLV…SFGN and NEIK…HSRR. At lysine 313 the chain carries N6-acetyllysine. A phosphoserine mark is found at serine 387, serine 389, and serine 402. Lysine 412 is modified (N6-acetyllysine). The tract at residues 462-473 is interaction with ZDHHC17; it reads GHDIITEQPRSQ. Residues 487–549 form a disordered region; it reads DLTSAATDGD…PDSAVTPSDS (63 aa). Over residues 521 to 549 the composition is skewed to polar residues; that stretch reads DGTQASSPISDSSQTTTEGPDSAVTPSDS. A lipid anchor (N-myristoyl glycine) is attached at glycine 522. Phosphoserine occurs at positions 611 and 614. HEAT repeat units lie at residues 773 to 810 and 873 to 911; these read FSLV…SLCS and KLQE…KLFY. The disordered stretch occupies residues 1137–1195; it reads KAALPSLTNPPSLSPIRRKGKEKEPGEQTSTPMSPKKGGEASTASRQSDTSGPVTASKS. Low complexity predominate over residues 1140 to 1151; it reads LPSLTNPPSLSP. A phosphoserine; by CDK5 mark is found at serine 1150 and serine 1170. A compositionally biased stretch (polar residues) spans 1178-1195; the sequence is STASRQSDTSGPVTASKS. The stretch at 1395–1432 is one HEAT 5 repeat; that stretch reads LFEPLVIKALKQYTTTTSVQLQKQVLDLLAQLVQLRVN. A Phosphoserine modification is found at serine 1845. Positions 2363-2372 match the Nuclear export signal motif; sequence IVVSLARLPL. Positions 2601–2628 are disordered; that stretch reads EEEWDEEEEEEADAPAPTSPPVSPVNSR. Residues 2602–2613 are compositionally biased toward acidic residues; the sequence is EEWDEEEEEEAD.

This sequence belongs to the huntingtin family. As to quaternary structure, interacts with PFN1. Interacts through its N-terminus with PRPF40A. Interacts with PQBP1. Interacts with SETD2. Interacts with SH3GLB1. Interacts with SYVN. Interacts with TPR; the interaction is inhibited by forms of Huntingtin with expanded polyglutamine stretch. Interacts with ZDHHC13 (via ANK repeats). Interacts with ZDHHC17 (via ANK repeats). Interacts with F8A1/F8A2/F8A3. Found in a complex with F8A1/F8A2/F8A3, HTT and RAB5A; mediates the recruitment of HTT by RAB5A. Phosphorylation at Ser-1150 and Ser-1170 by CDK5 in response to DNA damage in nuclei of neurons protects neurons against polyglutamine expansion as well as DNA damage mediated toxicity. In terms of processing, cleaved by caspases downstream of the polyglutamine stretch. Post-translationally, myristoylated at Gly-522, following proteolytic cleavage at Asp-521. Expressed to a high degree in all the regions of the brain of adults and in meiotic cells of the testis. In addition, very low levels are detected in various non-neuronal tissues (heart, muscle, liver, lung and kidney).

It localises to the cytoplasm. The protein resides in the nucleus. The protein localises to the cytoplasmic vesicle. Its subcellular location is the autophagosome. In terms of biological role, may play a role in microtubule-mediated transport or vesicle function. Promotes the formation of autophagic vesicles. The polypeptide is Huntingtin (Htt) (Rattus norvegicus (Rat)).